The following is a 463-amino-acid chain: Chromosomal replication initiator protein DnaA (463 aa).

Residues 1 to 83 (MSTNQIILTD…LQLFQHYNNT (83 aa)) form a domain I, interacts with DnaA modulators region. Positions 83 to 124 (TIKSIEIITKELPGTTQTVIELPTKTFADIGSSELNSENIFS) are domain II. The interval 125–343 (TLDVRFTFDN…GALNKVIAHS (219 aa)) is domain III, AAA+ region. G171, G173, K174, and T175 together coordinate ATP. The segment at 344 to 463 (NFTLKEITLE…INLLMKILQN (120 aa)) is domain IV, binds dsDNA.

The protein belongs to the DnaA family. In terms of assembly, oligomerizes as a right-handed, spiral filament on DNA at oriC.

It localises to the cytoplasm. Plays an essential role in the initiation and regulation of chromosomal replication. ATP-DnaA binds to the origin of replication (oriC) to initiate formation of the DNA replication initiation complex once per cell cycle. Binds the DnaA box (a 9 base pair repeat at the origin) and separates the double-stranded (ds)DNA. Forms a right-handed helical filament on oriC DNA; dsDNA binds to the exterior of the filament while single-stranded (ss)DNA is stabiized in the filament's interior. The ATP-DnaA-oriC complex binds and stabilizes one strand of the AT-rich DNA unwinding element (DUE), permitting loading of DNA polymerase. After initiation quickly degrades to an ADP-DnaA complex that is not apt for DNA replication. Binds acidic phospholipids. The protein is Chromosomal replication initiator protein DnaA of Rickettsia felis (strain ATCC VR-1525 / URRWXCal2) (Rickettsia azadi).